The chain runs to 311 residues: Lipoyl synthase (311 aa).

[4Fe-4S] cluster contacts are provided by C47, C52, C58, C73, C77, C80, and S286. A Radical SAM core domain is found at 59-276 (WSRHTATYLA…RSVGESLGLF (218 aa)).

Belongs to the radical SAM superfamily. Lipoyl synthase family. [4Fe-4S] cluster serves as cofactor.

It is found in the cytoplasm. It carries out the reaction [[Fe-S] cluster scaffold protein carrying a second [4Fe-4S](2+) cluster] + N(6)-octanoyl-L-lysyl-[protein] + 2 oxidized [2Fe-2S]-[ferredoxin] + 2 S-adenosyl-L-methionine + 4 H(+) = [[Fe-S] cluster scaffold protein] + N(6)-[(R)-dihydrolipoyl]-L-lysyl-[protein] + 4 Fe(3+) + 2 hydrogen sulfide + 2 5'-deoxyadenosine + 2 L-methionine + 2 reduced [2Fe-2S]-[ferredoxin]. The protein operates within protein modification; protein lipoylation via endogenous pathway; protein N(6)-(lipoyl)lysine from octanoyl-[acyl-carrier-protein]: step 2/2. Catalyzes the radical-mediated insertion of two sulfur atoms into the C-6 and C-8 positions of the octanoyl moiety bound to the lipoyl domains of lipoate-dependent enzymes, thereby converting the octanoylated domains into lipoylated derivatives. This Chlamydia trachomatis serovar D (strain ATCC VR-885 / DSM 19411 / UW-3/Cx) protein is Lipoyl synthase.